The chain runs to 271 residues: Ribosomal RNA small subunit methyltransferase A (271 aa).

S-adenosyl-L-methionine contacts are provided by N22, L24, G49, E70, D96, and N116.

The protein belongs to the class I-like SAM-binding methyltransferase superfamily. rRNA adenine N(6)-methyltransferase family. RsmA subfamily.

It is found in the cytoplasm. It catalyses the reaction adenosine(1518)/adenosine(1519) in 16S rRNA + 4 S-adenosyl-L-methionine = N(6)-dimethyladenosine(1518)/N(6)-dimethyladenosine(1519) in 16S rRNA + 4 S-adenosyl-L-homocysteine + 4 H(+). In terms of biological role, specifically dimethylates two adjacent adenosines (A1518 and A1519) in the loop of a conserved hairpin near the 3'-end of 16S rRNA in the 30S particle. May play a critical role in biogenesis of 30S subunits. The chain is Ribosomal RNA small subunit methyltransferase A from Sphingopyxis alaskensis (strain DSM 13593 / LMG 18877 / RB2256) (Sphingomonas alaskensis).